The following is a 242-amino-acid chain: Phosphatidylcholine synthase (242 aa).

Topologically, residues 1 to 15 are cytoplasmic; sequence MKIFNYKRVPYAEMR. A helical transmembrane segment spans residues 16 to 36; sequence AFSVHILTASGSFLAFLGVVA. Residues 37-41 lie on the Periplasmic side of the membrane; it reads AAEHR. The chain crosses the membrane as a helical span at residues 42–62; sequence FIDMFWWLGLALLVDGIDGPI. The Cytoplasmic segment spans residues 63-76; sequence ARKVRVKEVLPNWS. Residues 77–97 traverse the membrane as a helical segment; that stretch reads GDTLDNIIDYVTYVLLPAFAL. Residues 98 to 100 are Periplasmic-facing; that stretch reads YQS. A helical transmembrane segment spans residues 101-121; the sequence is GMIGEPWSFVAAGMIVVSSAI. Residues 122-133 lie on the Cytoplasmic side of the membrane; the sequence is YYADMGMKTDEY. A helical membrane pass occupies residues 134–154; that stretch reads FFSGFPVVWNMIVFTLFVIDA. Over 155–159 the chain is Periplasmic; sequence SATTA. Residues 160–180 form a helical membrane-spanning segment; that stretch reads LTVVIVSVVLTFLPINFLHPV. Residues 181–187 are Cytoplasmic-facing; it reads RVKRLRP. Residues 188–208 traverse the membrane as a helical segment; that stretch reads LNLGVFFLWSALGIFSLLMHF. Residues 209 to 214 are Periplasmic-facing; that stretch reads DTPEWA. The helical transmembrane segment at 215–235 threads the bilayer; it reads LILFIVTGAYLYVIGAVLQFF. Residues 236 to 242 are Cytoplasmic-facing; sequence PALGRET.

The protein belongs to the CDP-alcohol phosphatidyltransferase class-I family. The cofactor is Mn(2+).

Its subcellular location is the cell inner membrane. It catalyses the reaction a CDP-1,2-diacyl-sn-glycerol + choline = a 1,2-diacyl-sn-glycero-3-phosphocholine + CMP + H(+). Condenses choline with CDP-diglyceride to produce phosphatidylcholine and CMP. The protein is Phosphatidylcholine synthase of Rhizobium johnstonii (strain DSM 114642 / LMG 32736 / 3841) (Rhizobium leguminosarum bv. viciae).